The sequence spans 378 residues: tRNA (guanine(26)-N(2))-dimethyltransferase (378 aa).

The Trm1 methyltransferase domain occupies 4 to 374; that stretch reads KEVTEGKVRI…KEYEEITKCI (371 aa). S-adenosyl-L-methionine is bound by residues arginine 44, arginine 69, aspartate 87, aspartate 114, and alanine 115. Positions 246, 249, 263, and 266 each coordinate Zn(2+).

The protein belongs to the class I-like SAM-binding methyltransferase superfamily. Trm1 family.

The enzyme catalyses guanosine(26) in tRNA + 2 S-adenosyl-L-methionine = N(2)-dimethylguanosine(26) in tRNA + 2 S-adenosyl-L-homocysteine + 2 H(+). Functionally, dimethylates a single guanine residue at position 26 of a number of tRNAs using S-adenosyl-L-methionine as donor of the methyl groups. In Saccharolobus solfataricus (strain ATCC 35092 / DSM 1617 / JCM 11322 / P2) (Sulfolobus solfataricus), this protein is tRNA (guanine(26)-N(2))-dimethyltransferase.